A 261-amino-acid chain; its full sequence is Probable enoyl-CoA hydratase EchA17 (261 aa).

It belongs to the enoyl-CoA hydratase/isomerase family.

The catalysed reaction is a (3S)-3-hydroxyacyl-CoA = a (2E)-enoyl-CoA + H2O. It catalyses the reaction a 4-saturated-(3S)-3-hydroxyacyl-CoA = a (3E)-enoyl-CoA + H2O. Functionally, could possibly oxidize fatty acids using specific components. The polypeptide is Probable enoyl-CoA hydratase EchA17 (echA17) (Mycobacterium bovis (strain BCG / Pasteur 1173P2)).